The sequence spans 182 residues: NADH-quinone oxidoreductase subunit B 2 (182 aa).

[4Fe-4S] cluster-binding residues include cysteine 55, cysteine 56, cysteine 120, and cysteine 150.

This sequence belongs to the complex I 20 kDa subunit family. NDH-1 is composed of 14 different subunits. Subunits NuoB, C, D, E, F, and G constitute the peripheral sector of the complex. [4Fe-4S] cluster is required as a cofactor.

It is found in the cell inner membrane. It catalyses the reaction a quinone + NADH + 5 H(+)(in) = a quinol + NAD(+) + 4 H(+)(out). NDH-1 shuttles electrons from NADH, via FMN and iron-sulfur (Fe-S) centers, to quinones in the respiratory chain. The immediate electron acceptor for the enzyme in this species is believed to be ubiquinone. Couples the redox reaction to proton translocation (for every two electrons transferred, four hydrogen ions are translocated across the cytoplasmic membrane), and thus conserves the redox energy in a proton gradient. The protein is NADH-quinone oxidoreductase subunit B 2 of Sorangium cellulosum (strain So ce56) (Polyangium cellulosum (strain So ce56)).